A 235-amino-acid chain; its full sequence is Carboxy-S-adenosyl-L-methionine synthase (235 aa).

Residues tyrosine 35, 60 to 62 (GCS), 83 to 84 (DN), asparagine 124, and arginine 191 each bind S-adenosyl-L-methionine.

It belongs to the class I-like SAM-binding methyltransferase superfamily. Cx-SAM synthase family. As to quaternary structure, homodimer.

The catalysed reaction is prephenate + S-adenosyl-L-methionine = carboxy-S-adenosyl-L-methionine + 3-phenylpyruvate + H2O. In terms of biological role, catalyzes the conversion of S-adenosyl-L-methionine (SAM) to carboxy-S-adenosyl-L-methionine (Cx-SAM). In Campylobacter jejuni subsp. jejuni serotype O:23/36 (strain 81-176), this protein is Carboxy-S-adenosyl-L-methionine synthase.